The primary structure comprises 601 residues: Replication protein A 70 kDa DNA-binding subunit (601 aa).

The interval 107–172 is disordered; sequence MPGKIGDPTP…NTPGGSSKVV (66 aa). Over residues 124 to 135 the composition is skewed to low complexity; it reads APSTAPAPTARP. Residues 137 to 153 show a composition bias toward polar residues; sequence QPQNGSDGSTYRPSAQS. Positions 184-268 form a DNA-binding region, OB; the sequence is WTIRARVTNK…LKNDYEMTLN (85 aa). Residue Ser-370 is modified to Phosphoserine. The segment at 466-488 adopts a C4-type zinc-finger fold; the sequence is CPSKDCNKKVVDQQNGMFRCEKC.

This sequence belongs to the replication factor A protein 1 family. Component of the heterotrimeric canonical replication protein A complex (RPA).

The protein localises to the nucleus. The protein resides in the PML body. Its function is as follows. As part of the heterotrimeric replication protein A complex (RPA/RP-A), binds and stabilizes single-stranded DNA intermediates, that form during DNA replication or upon DNA stress. It prevents their reannealing and in parallel, recruits and activates different proteins and complexes involved in DNA metabolism. Thereby, it plays an essential role both in DNA replication and the cellular response to DNA damage. The protein is Replication protein A 70 kDa DNA-binding subunit (rpa1) of Danio rerio (Zebrafish).